A 120-amino-acid chain; its full sequence is Ribosomal protein eL22-like 1 (120 aa).

It belongs to the eukaryotic ribosomal protein eL22 family.

The protein is Ribosomal protein eL22-like 1 (rpl22l1) of Xenopus tropicalis (Western clawed frog).